Here is a 361-residue protein sequence, read N- to C-terminus: D-alanine--D-alanine ligase (361 aa).

In terms of domain architecture, ATP-grasp spans 134-344; the sequence is KLLLKSFDIP…FKDLVDNLID (211 aa). 167 to 222 contributes to the ATP binding site; that stretch reads KEVLGYPVIVKPAVLGSSIGINVAYSENQIESFIKEALKYDLTIVIEKFIEAREIE. Residues Asp-297, Glu-311, and Asn-313 each contribute to the Mg(2+) site.

It belongs to the D-alanine--D-alanine ligase family. It depends on Mg(2+) as a cofactor. The cofactor is Mn(2+).

The protein resides in the cytoplasm. It catalyses the reaction 2 D-alanine + ATP = D-alanyl-D-alanine + ADP + phosphate + H(+). Its pathway is cell wall biogenesis; peptidoglycan biosynthesis. In terms of biological role, cell wall formation. In Borreliella burgdorferi (strain ATCC 35210 / DSM 4680 / CIP 102532 / B31) (Borrelia burgdorferi), this protein is D-alanine--D-alanine ligase.